A 268-amino-acid polypeptide reads, in one-letter code: Tryptophan synthase alpha chain (268 aa).

Active-site proton acceptor residues include glutamate 49 and aspartate 60.

This sequence belongs to the TrpA family. As to quaternary structure, tetramer of two alpha and two beta chains.

It carries out the reaction (1S,2R)-1-C-(indol-3-yl)glycerol 3-phosphate + L-serine = D-glyceraldehyde 3-phosphate + L-tryptophan + H2O. The protein operates within amino-acid biosynthesis; L-tryptophan biosynthesis; L-tryptophan from chorismate: step 5/5. Its function is as follows. The alpha subunit is responsible for the aldol cleavage of indoleglycerol phosphate to indole and glyceraldehyde 3-phosphate. This is Tryptophan synthase alpha chain from Citrobacter koseri (strain ATCC BAA-895 / CDC 4225-83 / SGSC4696).